The following is a 450-amino-acid chain: Exodeoxyribonuclease 7 large subunit (450 aa).

This sequence belongs to the XseA family. Heterooligomer composed of large and small subunits.

The protein resides in the cytoplasm. It catalyses the reaction Exonucleolytic cleavage in either 5'- to 3'- or 3'- to 5'-direction to yield nucleoside 5'-phosphates.. In terms of biological role, bidirectionally degrades single-stranded DNA into large acid-insoluble oligonucleotides, which are then degraded further into small acid-soluble oligonucleotides. In Rickettsia felis (strain ATCC VR-1525 / URRWXCal2) (Rickettsia azadi), this protein is Exodeoxyribonuclease 7 large subunit.